The following is a 172-amino-acid chain: Small ribosomal subunit protein uS5 (172 aa).

Residues 17-80 enclose the S5 DRBM domain; it reads LREKMISVNR…DEARRKMVKV (64 aa).

It belongs to the universal ribosomal protein uS5 family. In terms of assembly, part of the 30S ribosomal subunit. Contacts proteins S4 and S8.

In terms of biological role, with S4 and S12 plays an important role in translational accuracy. Its function is as follows. Located at the back of the 30S subunit body where it stabilizes the conformation of the head with respect to the body. This is Small ribosomal subunit protein uS5 from Cupriavidus pinatubonensis (strain JMP 134 / LMG 1197) (Cupriavidus necator (strain JMP 134)).